Reading from the N-terminus, the 501-residue chain is Glycoprotein 3-alpha-L-fucosyltransferase A (501 aa).

Residues 1-39 are Cytoplasmic-facing; it reads MGVFSNLRGPKIGLTHEELPVVANGSTSSSSSPSSFKRK. A helical; Signal-anchor for type II membrane protein membrane pass occupies residues 40–60; it reads VSTFLPICVALVVIIEIGFLC. The Lumenal portion of the chain corresponds to 61-501; the sequence is RLDNASLVDT…PCPKFEVVFV (441 aa). Residues N64, N337, N420, and N481 are each glycosylated (N-linked (GlcNAc...) asparagine).

Belongs to the glycosyltransferase 10 family. It depends on Mg(2+) as a cofactor. Mn(2+) serves as cofactor. Post-translationally, glycosylation may be important for enzymatic activity.

The protein resides in the golgi apparatus. Its subcellular location is the golgi stack membrane. It catalyses the reaction N(4)-{beta-D-GlcNAc-(1-&gt;2)-alpha-D-Man-(1-&gt;3)-[beta-D-GlcNAc-(1-&gt;2)-alpha-D-Man-(1-&gt;6)]-beta-D-Man-(1-&gt;4)-beta-D-GlcNAc-(1-&gt;4)-beta-D-GlcNAc}-L-asparaginyl-[protein] + GDP-beta-L-fucose = N(4)-{beta-D-GlcNAc-(1-&gt;2)-alpha-D-Man-(1-&gt;3)-[beta-D-GlcNAc-(1-&gt;2)-alpha-D-Man-(1-&gt;6)]-beta-D-Man-(1-&gt;4)-beta-D-GlcNAc-(1-&gt;4)-[alpha-L-Fuc(1-&gt;3)]-beta-D-GlcNAc}-L-asparaginyl-[protein] + GDP + H(+). The protein operates within protein modification; protein glycosylation. Its activity is regulated as follows. Inhibited by Cu(2+) and Zn(2+). Its function is as follows. Involved in cell wall synthesis. Preferentially catalyzes the addition of fucose in alpha 1-3 linkage to the first GlcNAc residue next to the peptide chains in N-glycans. In Arabidopsis thaliana (Mouse-ear cress), this protein is Glycoprotein 3-alpha-L-fucosyltransferase A (FUT11).